The following is an 85-amino-acid chain: Cell division topological specificity factor (85 aa).

It belongs to the MinE family.

In terms of biological role, prevents the cell division inhibition by proteins MinC and MinD at internal division sites while permitting inhibition at polar sites. This ensures cell division at the proper site by restricting the formation of a division septum at the midpoint of the long axis of the cell. This Cellvibrio japonicus (strain Ueda107) (Pseudomonas fluorescens subsp. cellulosa) protein is Cell division topological specificity factor.